A 494-amino-acid chain; its full sequence is Prenylcysteine oxidase 1-like (494 aa).

The signal sequence occupies residues Met1–Gly22. N-linked (GlcNAc...) asparagine glycosylation occurs at Asn342.

This sequence belongs to the prenylcysteine oxidase family. The cofactor is FAD.

Its subcellular location is the secreted. Its function is as follows. Likely to have oxidoreductase activity. Required in the mevalonate pathway to regulate prenylation and enhances the bactericidal activity of neutrophils. In Homo sapiens (Human), this protein is Prenylcysteine oxidase 1-like (PCYOX1L).